The following is a 400-amino-acid chain: Exodeoxyribonuclease 7 large subunit (400 aa).

Belongs to the XseA family. Heterooligomer composed of large and small subunits.

The protein localises to the cytoplasm. It carries out the reaction Exonucleolytic cleavage in either 5'- to 3'- or 3'- to 5'-direction to yield nucleoside 5'-phosphates.. In terms of biological role, bidirectionally degrades single-stranded DNA into large acid-insoluble oligonucleotides, which are then degraded further into small acid-soluble oligonucleotides. This chain is Exodeoxyribonuclease 7 large subunit, found in Clostridium perfringens (strain SM101 / Type A).